The following is a 305-amino-acid chain: Orotidine 5'-phosphate decarboxylase (305 aa).

K108 functions as the Proton donor in the catalytic mechanism.

The protein belongs to the OMP decarboxylase family. Type 2 subfamily.

It carries out the reaction orotidine 5'-phosphate + H(+) = UMP + CO2. The protein operates within pyrimidine metabolism; UMP biosynthesis via de novo pathway; UMP from orotate: step 2/2. The polypeptide is Orotidine 5'-phosphate decarboxylase (Caldicellulosiruptor saccharolyticus (strain ATCC 43494 / DSM 8903 / Tp8T 6331)).